The sequence spans 140 residues: Truncated tyrosine phosphatase D1 (140 aa).

The Tyrosine-protein phosphatase domain maps to 1 to 140 (MRRPNCIAEI…SAQWIQFLKK (140 aa)).

It belongs to the protein-tyrosine phosphatase family.

This chain is Truncated tyrosine phosphatase D1 (D1), found in Microplitis demolitor bracovirus (isolate Webb) (MdBV).